The following is a 406-amino-acid chain: Dual-specificity RNA methyltransferase RlmN (406 aa).

Glutamate 119 acts as the Proton acceptor in catalysis. Residues 125 to 370 (DKGRGTLCVS…AMVRRTRGDD (246 aa)) form the Radical SAM core domain. Cysteine 132 and cysteine 375 are disulfide-bonded. Residues cysteine 139, cysteine 143, and cysteine 146 each contribute to the [4Fe-4S] cluster site. Residues 192 to 193 (GE), serine 224, 246 to 248 (SLH), and asparagine 332 contribute to the S-adenosyl-L-methionine site. The active-site S-methylcysteine intermediate is cysteine 375.

Belongs to the radical SAM superfamily. RlmN family. It depends on [4Fe-4S] cluster as a cofactor.

Its subcellular location is the cytoplasm. The catalysed reaction is adenosine(2503) in 23S rRNA + 2 reduced [2Fe-2S]-[ferredoxin] + 2 S-adenosyl-L-methionine = 2-methyladenosine(2503) in 23S rRNA + 5'-deoxyadenosine + L-methionine + 2 oxidized [2Fe-2S]-[ferredoxin] + S-adenosyl-L-homocysteine. It carries out the reaction adenosine(37) in tRNA + 2 reduced [2Fe-2S]-[ferredoxin] + 2 S-adenosyl-L-methionine = 2-methyladenosine(37) in tRNA + 5'-deoxyadenosine + L-methionine + 2 oxidized [2Fe-2S]-[ferredoxin] + S-adenosyl-L-homocysteine. Its function is as follows. Specifically methylates position 2 of adenine 2503 in 23S rRNA and position 2 of adenine 37 in tRNAs. m2A2503 modification seems to play a crucial role in the proofreading step occurring at the peptidyl transferase center and thus would serve to optimize ribosomal fidelity. This Xylella fastidiosa (strain M12) protein is Dual-specificity RNA methyltransferase RlmN.